We begin with the raw amino-acid sequence, 521 residues long: Alkyl hydroperoxide reductase subunit F (521 aa).

An FAD-binding site is contributed by 213 to 228; sequence DVLVVGGGPAGAAAAI. Cys344 and Cys347 form a disulfide bridge. Position 356–370 (356–370) interacts with NAD(+); sequence RVAVIGGGNSGVEAA. 477–487 lines the FAD pocket; sequence TSLPGIFAAGD.

This sequence belongs to the class-II pyridine nucleotide-disulfide oxidoreductase family. As to quaternary structure, homodimer. It depends on FAD as a cofactor.

Its function is as follows. Serves to protect the cell against DNA damage by alkyl hydroperoxides. It can use either NADH or NADPH as electron donor for direct reduction of redox dyes or of alkyl hydroperoxides when combined with the AhpC protein. This is Alkyl hydroperoxide reductase subunit F (ahpF) from Pseudomonas aeruginosa (strain ATCC 15692 / DSM 22644 / CIP 104116 / JCM 14847 / LMG 12228 / 1C / PRS 101 / PAO1).